The following is a 481-amino-acid chain: 2-methylisoborneol synthase (481 aa).

Disordered regions lie at residues 1–125 and 139–160; these read MPDS…PVGP and QAAV…GPVV. Over residues 11–23 the composition is skewed to pro residues; sequence TSLPEQPPAPPAT. Residues 24-33 are compositionally biased toward low complexity; that stretch reads APDAPAATVT. Pro residues-rich tracts occupy residues 52–64 and 71–104; these read VTRP…PSMP and SSPP…PPAT. Low complexity predominate over residues 105–114; the sequence is APETSAATGS. Residues Asp238, Asp239, Glu243, Asn386, Ser390, and Glu394 each contribute to the Mg(2+) site.

This sequence belongs to the terpene synthase family. 2-methylisoborneol synthase subfamily. Mg(2+) is required as a cofactor.

The enzyme catalyses (E)-2-methylgeranyl diphosphate + H2O = 2-methylisoborneol + diphosphate. In terms of biological role, catalyzes the cyclization of 2-methylgeranyl diphosphate (2-MeGPP) to 2-methylisoborneol (2-MIB), which likely involves the intermediacy of 2-methyllinalyl diphosphate. In Streptomyces lasalocidi (Streptomyces lasaliensis), this protein is 2-methylisoborneol synthase (tpc).